The primary structure comprises 345 residues: MAAPGKLSTCRLPPLPTIREIIKLFRLQATKQLSQNFLLDLRLTDKIVRKAGNLANAYVYEVGPGPGGITRSILNADVAELLVVEKDTRFIPGLQMLSEAAPGKLRIVHGDVLTFKVEKAFSESLKRPWEDDPPNVHIIGNLPFSVSTPLIIKWLENISCRDGPFVYGRTQMTLTFQKEVAERLAANTGSKQRSRLSVMAQYLCNVRHIFTIPGRAFVPKPEVDVGVVHFTPLIQPKIEQPFKLVEKVVQNVFQFRRKYCHRGLGMLFPEAQRLENTGRLLELADIDPTLRPRQLSISHFKSLCEVYRRMCDEDPQLFAYNFREELRQRKIKKKEKQDDAKSYRL.

Residues 1 to 27 constitute a mitochondrion transit peptide; the sequence is MAAPGKLSTCRLPPLPTIREIIKLFRL. Residues Leu-38, Gly-63, Glu-85, Lys-86, Asp-111, Val-112, and Asn-141 each coordinate S-adenosyl-L-methionine.

It belongs to the class I-like SAM-binding methyltransferase superfamily. rRNA adenine N(6)-methyltransferase family. KsgA subfamily. Interacts with mitochondrial RNA polymerase POLRMT. Interacts with TFAM. Bound to the maturing mtSSU until the late stages of assembly.

The protein resides in the mitochondrion. The catalysed reaction is adenosine(N)/adenosine(N+1) in rRNA + 4 S-adenosyl-L-methionine = N(6)-dimethyladenosine(N)/N(6)-dimethyladenosine(N+1) in rRNA + 4 S-adenosyl-L-homocysteine + 4 H(+). Its function is as follows. Mitochondrial methyltransferase which uses S-adenosyl methionine to dimethylate two highly conserved adjacent adenosine residues (A1583 and A1584) within the loop of helix 45 at the 3-prime end of 12S rRNA, thereby regulating the assembly or stability of the small subunit of the mitochondrial ribosome. Also required for basal transcription of mitochondrial DNA, probably via its interaction with POLRMT and TFAM. Stimulates transcription independently of the methyltransferase activity. The polypeptide is Dimethyladenosine transferase 1, mitochondrial (TFB1M) (Macaca fascicularis (Crab-eating macaque)).